A 459-amino-acid polypeptide reads, in one-letter code: Bifunctional protein GlmU (459 aa).

The segment at M1–R230 is pyrophosphorylase. UDP-N-acetyl-alpha-D-glucosamine contacts are provided by residues L9–G12, K23, Q73, and G78–T79. Mg(2+) is bound at residue D103. The UDP-N-acetyl-alpha-D-glucosamine site is built by G140, E155, N170, and N228. A Mg(2+)-binding site is contributed by N228. The linker stretch occupies residues V231–N251. The interval G252–S459 is N-acetyltransferase. Positions 333 and 351 each coordinate UDP-N-acetyl-alpha-D-glucosamine. H363 acts as the Proton acceptor in catalysis. UDP-N-acetyl-alpha-D-glucosamine contacts are provided by Y366 and N377. Residues N386 to Y387, A423, and R440 each bind acetyl-CoA.

In the N-terminal section; belongs to the N-acetylglucosamine-1-phosphate uridyltransferase family. This sequence in the C-terminal section; belongs to the transferase hexapeptide repeat family. Homotrimer. Mg(2+) is required as a cofactor.

It is found in the cytoplasm. It catalyses the reaction alpha-D-glucosamine 1-phosphate + acetyl-CoA = N-acetyl-alpha-D-glucosamine 1-phosphate + CoA + H(+). The enzyme catalyses N-acetyl-alpha-D-glucosamine 1-phosphate + UTP + H(+) = UDP-N-acetyl-alpha-D-glucosamine + diphosphate. It functions in the pathway nucleotide-sugar biosynthesis; UDP-N-acetyl-alpha-D-glucosamine biosynthesis; N-acetyl-alpha-D-glucosamine 1-phosphate from alpha-D-glucosamine 6-phosphate (route II): step 2/2. It participates in nucleotide-sugar biosynthesis; UDP-N-acetyl-alpha-D-glucosamine biosynthesis; UDP-N-acetyl-alpha-D-glucosamine from N-acetyl-alpha-D-glucosamine 1-phosphate: step 1/1. The protein operates within bacterial outer membrane biogenesis; LPS lipid A biosynthesis. Its function is as follows. Catalyzes the last two sequential reactions in the de novo biosynthetic pathway for UDP-N-acetylglucosamine (UDP-GlcNAc). The C-terminal domain catalyzes the transfer of acetyl group from acetyl coenzyme A to glucosamine-1-phosphate (GlcN-1-P) to produce N-acetylglucosamine-1-phosphate (GlcNAc-1-P), which is converted into UDP-GlcNAc by the transfer of uridine 5-monophosphate (from uridine 5-triphosphate), a reaction catalyzed by the N-terminal domain. This is Bifunctional protein GlmU from Bacillus cereus (strain AH187).